The chain runs to 176 residues: Beta-carotene hydroxylase (176 aa).

Residues 10 to 126 (LSVIAMEGIA…AHRLHHAVRG (117 aa)) enclose the Fatty acid hydroxylase domain. The interval 152 to 176 (HGRPPKRDAAKDRPDAASPSSSSPE) is disordered. The span at 156–166 (PKRDAAKDRPD) shows a compositional bias: basic and acidic residues. Residues 167–176 (AASPSSSSPE) are compositionally biased toward low complexity.

Belongs to the sterol desaturase family.

The protein operates within carotenoid biosynthesis; zeaxanthin biosynthesis. Its function is as follows. Catalyzes the hydroxylation reaction from beta-carotene to zeaxanthin. The chain is Beta-carotene hydroxylase (crtZ) from Pseudescherichia vulneris (Escherichia vulneris).